Here is a 513-residue protein sequence, read N- to C-terminus: Ribonuclease Y (513 aa).

The chain crosses the membrane as a helical span at residues 6–26; sequence YIIIAVVIIIICVILGLYVVD. The tract at residues 35–59 is disordered; that stretch reads EASKEARRLKEEAERDAEAKKKEAI. The KH domain occupies 203–288; it reads TVHVVNLPND…EMVEKAKKEV (86 aa). One can recognise an HD domain in the interval 329-422; sequence VLKHSIEVSH…VQAADAISAA (94 aa).

It belongs to the RNase Y family.

Its subcellular location is the cell membrane. Its function is as follows. Endoribonuclease that initiates mRNA decay. The polypeptide is Ribonuclease Y (Clostridium botulinum (strain Okra / Type B1)).